Here is a 296-residue protein sequence, read N- to C-terminus: MFKSGFVTIVGRPNVGKSTLLNAIMKEKLSIVSCRPQTTRNNIQTILTEDNYQLVFVDTPGIHKPKHKLGEYMVKSASDAMKDVDLVLFLINPDEKPGRGDLFIIEQLKEVKVPVFLVLNKIDENPQEKVAETLKIYSELMEFEEIIPISALKGKNIDLLKELMFKYIPEGPQYYPEDMIIDQNERFIVAEIVREKALRLLSEEVPHGIAVEILQMKKNEKGTYHIEGNILCEKNSHKPIIIGKGGSKLKKISQYARQDIEAFLQSKVYIRLWVKVKEEWRDNQSLLKELGYKKMK.

Residues 3–170 (KSGFVTIVGR…KELMFKYIPE (168 aa)) form the Era-type G domain. Positions 11-18 (GRPNVGKS) are G1. 11 to 18 (GRPNVGKS) contacts GTP. The tract at residues 37–41 (QTTRN) is G2. Residues 58–61 (DTPG) are G3. GTP-binding positions include 58 to 62 (DTPGI) and 120 to 123 (NKID). Residues 120-123 (NKID) form a G4 region. The tract at residues 149-151 (ISA) is G5. The KH type-2 domain maps to 201-278 (LSEEVPHGIA…YIRLWVKVKE (78 aa)).

It belongs to the TRAFAC class TrmE-Era-EngA-EngB-Septin-like GTPase superfamily. Era GTPase family. Monomer.

It is found in the cytoplasm. Its subcellular location is the cell membrane. In terms of biological role, an essential GTPase that binds both GDP and GTP, with rapid nucleotide exchange. Plays a role in 16S rRNA processing and 30S ribosomal subunit biogenesis and possibly also in cell cycle regulation and energy metabolism. The polypeptide is GTPase Era (Clostridium botulinum (strain Langeland / NCTC 10281 / Type F)).